Reading from the N-terminus, the 378-residue chain is TelA-like protein SAV1406 (378 aa).

Belongs to the TelA family.

The chain is TelA-like protein SAV1406 from Staphylococcus aureus (strain Mu50 / ATCC 700699).